We begin with the raw amino-acid sequence, 250 residues long: Probable transcriptional regulatory protein ckrop_1032 (250 aa).

The disordered stretch occupies residues 1-22 (MSGHSKWATTKHKKAANDAKRG).

The protein belongs to the TACO1 family.

It is found in the cytoplasm. This is Probable transcriptional regulatory protein ckrop_1032 from Corynebacterium kroppenstedtii (strain DSM 44385 / JCM 11950 / CIP 105744 / CCUG 35717).